The primary structure comprises 186 residues: Ribosome-recycling factor (186 aa).

The protein belongs to the RRF family.

Its subcellular location is the cytoplasm. In terms of biological role, responsible for the release of ribosomes from messenger RNA at the termination of protein biosynthesis. May increase the efficiency of translation by recycling ribosomes from one round of translation to another. This chain is Ribosome-recycling factor, found in Bartonella quintana (strain Toulouse) (Rochalimaea quintana).